We begin with the raw amino-acid sequence, 161 residues long: Nucleotide-binding protein Aave_1854 (161 aa).

The protein belongs to the YajQ family.

Functionally, nucleotide-binding protein. In Paracidovorax citrulli (strain AAC00-1) (Acidovorax citrulli), this protein is Nucleotide-binding protein Aave_1854.